The chain runs to 41 residues: DQPAERMQDDISSEHHPFFDPVKRCCKYGWTCVLGCSPCGC.

Positions 1–24 are excised as a propeptide; sequence DQPAERMQDDISSEHHPFFDPVKR.

This sequence belongs to the conotoxin M superfamily. Contains 3 disulfide bonds. They are not added, since framework IV presents two different connectivities (I-V, II-III, IV-VI and I-III, II-V, IV-VI). In terms of tissue distribution, expressed by the venom duct.

It is found in the secreted. Functionally, mu-conotoxins block voltage-gated sodium channels (Nav). Blocks reversibly sodium channels in molluskan neurons, but has no effect on sodium currents in bovine chromaffin cells or in rat brain synaptosomes. Induces paralysis in mollusks (C.retripictus). In Conus pennaceus (Feathered cone), this protein is Mu-conotoxin pn4c.